The sequence spans 213 residues: Pyridoxine/pyridoxamine 5'-phosphate oxidase (213 aa).

Substrate contacts are provided by residues 8-11 and Lys-66; that span reads RKNY. FMN contacts are provided by residues 61–66, 76–77, Arg-82, Lys-83, and Gln-105; these read RIVLIK and FT. Residues Tyr-123, Arg-127, and Ser-131 each coordinate substrate. Residues 140 to 141 and Trp-184 contribute to the FMN site; that span reads QS. 190 to 192 contributes to the substrate binding site; that stretch reads RLH. Arg-194 lines the FMN pocket.

It belongs to the pyridoxamine 5'-phosphate oxidase family. Homodimer. The cofactor is FMN.

The enzyme catalyses pyridoxamine 5'-phosphate + O2 + H2O = pyridoxal 5'-phosphate + H2O2 + NH4(+). The catalysed reaction is pyridoxine 5'-phosphate + O2 = pyridoxal 5'-phosphate + H2O2. It functions in the pathway cofactor metabolism; pyridoxal 5'-phosphate salvage; pyridoxal 5'-phosphate from pyridoxamine 5'-phosphate: step 1/1. It participates in cofactor metabolism; pyridoxal 5'-phosphate salvage; pyridoxal 5'-phosphate from pyridoxine 5'-phosphate: step 1/1. In terms of biological role, catalyzes the oxidation of either pyridoxine 5'-phosphate (PNP) or pyridoxamine 5'-phosphate (PMP) into pyridoxal 5'-phosphate (PLP). The chain is Pyridoxine/pyridoxamine 5'-phosphate oxidase from Paraburkholderia phytofirmans (strain DSM 17436 / LMG 22146 / PsJN) (Burkholderia phytofirmans).